A 110-amino-acid polypeptide reads, in one-letter code: MSLTEARFHDLVDATQQNIEDVFDESGLDVDLENSAGVLTVKFEGGSQLIFSRQEPLRQLWLAAKSGGFHFDYDEEESRWACDTSDELLSEMLARMTFEQAGADLDFSEI.

The protein belongs to the frataxin family.

Functionally, involved in iron-sulfur (Fe-S) cluster assembly. May act as a regulator of Fe-S biogenesis. The sequence is that of Iron-sulfur cluster assembly protein CyaY from Pseudomonas syringae pv. tomato (strain ATCC BAA-871 / DC3000).